The chain runs to 484 residues: Perphorin-2 (484 aa).

N-linked (GlcNAc...) asparagine glycans are attached at residues N16, N240, N256, N265, N326, N330, N356, and N411.

It is found in the secreted. The protein localises to the extracellular space. The protein resides in the extracellular matrix. In terms of biological role, may be involved in conversion of asexual males and females to the sexual pathway. The polypeptide is Perphorin-2 (Volvox carteri (Green alga)).